A 146-amino-acid chain; its full sequence is MKTFNAKAEEVERKWWIVDAAGQKVGRVATHVATILRGKNKAIYTPNVDTGDFVVVINTDKMELSGTKWQDKKYYSHTRFFGSLKEMTAAQAKEKDSTFIIHEAVRGMLPTNKLSRHVIMKMKAYTGAEHPHAAQKPALFTLPSKK.

This sequence belongs to the universal ribosomal protein uL13 family. As to quaternary structure, part of the 50S ribosomal subunit.

In terms of biological role, this protein is one of the early assembly proteins of the 50S ribosomal subunit, although it is not seen to bind rRNA by itself. It is important during the early stages of 50S assembly. The polypeptide is Large ribosomal subunit protein uL13 (Bdellovibrio bacteriovorus (strain ATCC 15356 / DSM 50701 / NCIMB 9529 / HD100)).